Consider the following 586-residue polypeptide: Acyl-coenzyme A synthetase ACSM3, mitochondrial (586 aa).

A mitochondrion-targeting transit peptide spans 1 to 27 (MLACVTMKMLRHAKCFQRLAIFGSVRA). N6-succinyllysine is present on residues Lys73 and Lys106. The residue at position 157 (Lys157) is an N6-acetyllysine. Residues 235-243 (TSGTSGYPK), 374-379 (EGYGQT), Asp461, Arg476, and Lys572 contribute to the ATP site.

The protein belongs to the ATP-dependent AMP-binding enzyme family. The cofactor is Mg(2+). Mn(2+) is required as a cofactor.

The protein resides in the mitochondrion. It localises to the mitochondrion matrix. The enzyme catalyses a medium-chain fatty acid + ATP + CoA = a medium-chain fatty acyl-CoA + AMP + diphosphate. It catalyses the reaction propanoate + ATP + CoA = propanoyl-CoA + AMP + diphosphate. The catalysed reaction is butanoate + ATP + CoA = butanoyl-CoA + AMP + diphosphate. It carries out the reaction 2-methylpropanoate + ATP + CoA = 2-methylpropanoyl-CoA + AMP + diphosphate. The enzyme catalyses 2-methylbutanoate + ATP + CoA = 2-methylbutanoyl-CoA + AMP + diphosphate. It catalyses the reaction octanoate + ATP + CoA = octanoyl-CoA + AMP + diphosphate. Functionally, catalyzes the activation of fatty acids by CoA to produce an acyl-CoA, the first step in fatty acid metabolism. Capable of activating medium-chain fatty acids with a preference for isobutyrate among fatty acids with 2-6 carbon atoms. This is Acyl-coenzyme A synthetase ACSM3, mitochondrial (ACSM3) from Pongo abelii (Sumatran orangutan).